A 359-amino-acid chain; its full sequence is Protein Wnt-5a (359 aa).

The N-terminal stretch at Met-1–Asp-20 is a signal peptide. A disulfide bond links Cys-83 and Cys-94. 2 N-linked (GlcNAc...) asparagine glycosylation sites follow: Asn-93 and Asn-99. 10 cysteine pairs are disulfide-bonded: Cys-133/Cys-141, Cys-143/Cys-161, Cys-217/Cys-231, Cys-219/Cys-226, Cys-288/Cys-319, Cys-304/Cys-314, Cys-318/Cys-358, Cys-334/Cys-349, Cys-336/Cys-346, and Cys-341/Cys-342. Ser-223 carries the O-palmitoleoyl serine; by PORCN lipid modification. N-linked (GlcNAc...) asparagine glycosylation is found at Asn-291 and Asn-305.

It belongs to the Wnt family. Palmitoleoylation is required for efficient binding to frizzled receptors. Depalmitoleoylation leads to Wnt signaling pathway inhibition.

The protein resides in the secreted. The protein localises to the extracellular space. Its subcellular location is the extracellular matrix. Ligand for members of the frizzled family of seven transmembrane receptors. Can activate or inhibit canonical Wnt signaling, depending on receptor context. Required during embryogenesis for extension of the primary anterior-posterior axis. In Pleurodeles waltl (Iberian ribbed newt), this protein is Protein Wnt-5a (WNT5A).